A 2033-amino-acid chain; its full sequence is Major viral transcription factor ICP4 homolog (2033 aa).

The span at 1–16 shows a compositional bias: low complexity; it reads MFWHQPRQQQLRQLQR. 17 disordered regions span residues 1-47, 95-145, 157-199, 218-240, 277-301, 313-338, 350-461, 505-527, 719-747, 1015-1064, 1085-1186, 1294-1342, 1420-1451, 1531-1612, 1636-1655, 1664-1718, and 1746-2033; these read MFWH…PPSP, FSDP…LPAP, LSSS…GSSY, PPRS…ADRC, DQSP…CVGE, EERK…ESLP, AEIN…GAVA, SFAQ…ARQR, LPPD…ASRT, GKQS…GALN, LLSD…PGDP, ETWR…EGGT, ASPH…RDAA, VVFP…PPAA, RFDE…GGKP, LCEQ…SPSP, and EISP…GTER. Over residues 157-173 the composition is skewed to low complexity; it reads LSSSSPSGSSRGSVTSP. Basic and acidic residues predominate over residues 223–240; the sequence is PDCRRGEPVSEDGMADRC. Residues 313–326 show a composition bias toward basic and acidic residues; the sequence is EERKEAARRSPDAE. A compositionally biased stretch (acidic residues) spans 359–368; the sequence is ESDEAEDEDA. Positions 507–518 are enriched in low complexity; the sequence is AQRQQPRQQQHA. Over residues 732–741 the composition is skewed to gly residues; that stretch reads KSRGGRGGGS. Low complexity predominate over residues 1031 to 1056; it reads RATASSPRTPASRPPHGSAAAPPSGR. Over residues 1086-1097 the composition is skewed to acidic residues; it reads LSDEAGTDDDGD. Positions 1169-1181 are enriched in low complexity; sequence SSSSFASSSLASA. The segment covering 1294 to 1303 has biased composition (basic and acidic residues); it reads ETWRDAEDHP. The span at 1575–1591 shows a compositional bias: basic and acidic residues; that stretch reads SHDRSPSSSSRRRDGRP. Over residues 1592 to 1602 the composition is skewed to basic residues; sequence SSRRRPSRRMS. 2 stretches are compositionally biased toward basic and acidic residues: residues 1752-1765 and 1774-1795; these read RRRD…GCRQ and EGGR…DSVP. Low complexity predominate over residues 1812-1843; that stretch reads SAGRSSSSSSSSSSSSSSSPSSRPSRSATPSL. Over residues 1853-1869 the composition is skewed to basic and acidic residues; sequence APVDRSRSGRRRERDRP. Over residues 1912 to 1921 the composition is skewed to polar residues; the sequence is TPSSATTLPS. The span at 1927–1936 shows a compositional bias: acidic residues; it reads DSVDETETED. A compositionally biased stretch (low complexity) spans 1937 to 1948; that stretch reads SAPPARLAPSPL.

This sequence belongs to the herpesviridae ICP4 family. In terms of processing, a long stretch of serine residues may be a major site of phosphorylation.

It localises to the host nucleus. This IE protein is a multifunctional protein capable of migrating to the nucleus, binding to DNA, trans-activating other viral genes, and autoregulating its own synthesis. It is required for the switch from immediate-early to early mode of gene expression. This Amazona oratrix (yellow-headed parrot) protein is Major viral transcription factor ICP4 homolog (ICP4B).